We begin with the raw amino-acid sequence, 125 residues long: UPF0251 protein DSY3441 (125 aa).

Belongs to the UPF0251 family.

This is UPF0251 protein DSY3441 from Desulfitobacterium hafniense (strain Y51).